The sequence spans 272 residues: Glutamate racemase (272 aa).

Substrate contacts are provided by residues 13–14 (DS) and 45–46 (YG). Catalysis depends on cysteine 76, which acts as the Proton donor/acceptor. 77-78 (NT) is a substrate binding site. The active-site Proton donor/acceptor is the cysteine 187. 188 to 189 (TH) is a binding site for substrate.

The protein belongs to the aspartate/glutamate racemases family.

The catalysed reaction is L-glutamate = D-glutamate. The protein operates within cell wall biogenesis; peptidoglycan biosynthesis. Its function is as follows. Provides the (R)-glutamate required for cell wall biosynthesis. The protein is Glutamate racemase of Roseiflexus sp. (strain RS-1).